The chain runs to 301 residues: Oxaloacetate tautomerase YisK (301 aa).

Lys-99 provides a ligand contact to oxalate. Glu-148, Glu-150, and Asp-179 together coordinate Mn(2+). Oxalate-binding residues include Lys-196 and Thr-266.

It belongs to the FAH family. In terms of assembly, homodimer. Mg(2+) is required as a cofactor. The cofactor is Mn(2+).

The protein localises to the cytoplasm. The catalysed reaction is oxaloacetate = enol-oxaloacetate. It carries out the reaction oxaloacetate + H(+) = pyruvate + CO2. Tautomerase that converts enol-oxaloacetate to the keto form of oxaloacetate. Also shows weak oxaloacetate decarboxylase (ODx), catalyzing the decarboxylation of oxaloacetate (OAA) to pyruvate and CO(2). The protein is Oxaloacetate tautomerase YisK of Bacillus subtilis (strain 168).